The following is an 865-amino-acid chain: Aconitate hydratase B (865 aa).

Substrate is bound by residues Arg-191, 244–246 (SSR), 414–416 (QDT), and Ser-498. The [4Fe-4S] cluster site is built by Cys-710, Cys-769, and Cys-772. Residues Arg-791 and Arg-796 each contribute to the substrate site.

Belongs to the aconitase/IPM isomerase family. Monomer. AcnB can also form a homodimer. The monomer-homodimer transition is dependent on iron availability and the carboxymethylation of C-273 inhibits the dimer formation. The cofactor is [4Fe-4S] cluster.

It catalyses the reaction citrate = D-threo-isocitrate. The enzyme catalyses (2S,3R)-3-hydroxybutane-1,2,3-tricarboxylate = 2-methyl-cis-aconitate + H2O. It participates in organic acid metabolism; propanoate degradation. It functions in the pathway carbohydrate metabolism; tricarboxylic acid cycle; isocitrate from oxaloacetate: step 2/2. Functionally, involved in the catabolism of short chain fatty acids (SCFA) via the tricarboxylic acid (TCA)(acetyl degradation route) and the 2-methylcitrate cycle I (propionate degradation route). Catalyzes the reversible isomerization of citrate to isocitrate via cis-aconitate. Also catalyzes the hydration of 2-methyl-cis-aconitate to yield (2R,3S)-2-methylisocitrate. The apo form of AcnB functions as a RNA-binding regulatory protein. During oxidative stress inactive AcnB apo-enzyme without iron sulfur clusters binds the acnB mRNA 3' UTRs (untranslated regions), stabilizes acnB mRNA and increases AcnB synthesis, thus mediating a post-transcriptional positive autoregulatory switch. AcnB also decreases the stability of the sodA transcript. In Escherichia coli (strain K12), this protein is Aconitate hydratase B.